The chain runs to 309 residues: UDP-N-acetylenolpyruvoylglucosamine reductase (309 aa).

An FAD-binding PCMH-type domain is found at 34-198; sequence RVGGPAEVMF…VRARLHARPG (165 aa). The active site involves Arg178. The active-site Proton donor is the Ser227. Glu297 is a catalytic residue.

Belongs to the MurB family. FAD serves as cofactor.

It is found in the cytoplasm. It carries out the reaction UDP-N-acetyl-alpha-D-muramate + NADP(+) = UDP-N-acetyl-3-O-(1-carboxyvinyl)-alpha-D-glucosamine + NADPH + H(+). The protein operates within cell wall biogenesis; peptidoglycan biosynthesis. Functionally, cell wall formation. This Acidiphilium cryptum (strain JF-5) protein is UDP-N-acetylenolpyruvoylglucosamine reductase.